We begin with the raw amino-acid sequence, 433 residues long: ATP-dependent protease ATPase subunit HslU (433 aa).

ATP-binding positions include valine 18, glycine 60–glutamate 65, aspartate 246, glutamate 311, and arginine 383.

It belongs to the ClpX chaperone family. HslU subfamily. A double ring-shaped homohexamer of HslV is capped on each side by a ring-shaped HslU homohexamer. The assembly of the HslU/HslV complex is dependent on binding of ATP.

The protein localises to the cytoplasm. Functionally, ATPase subunit of a proteasome-like degradation complex; this subunit has chaperone activity. The binding of ATP and its subsequent hydrolysis by HslU are essential for unfolding of protein substrates subsequently hydrolyzed by HslV. HslU recognizes the N-terminal part of its protein substrates and unfolds these before they are guided to HslV for hydrolysis. This is ATP-dependent protease ATPase subunit HslU from Rhodopseudomonas palustris (strain TIE-1).